Reading from the N-terminus, the 53-residue chain is HOXB-AS3 peptide (53 aa).

Residues 1 to 53 are disordered; that stretch reads MPVLPGTQRYPHQRRRFQAAGGGAESGKRGSEEAPGVAWSGSESGRDAATPAW.

In terms of assembly, interacts with HNRNPA1 (via the RGG-box). Interacts with IGF2BP2.

In terms of biological role, blocks the binding of HNRNPA1 to the intronic sequences flanking exon 9 of the PKM gene by competitively binding to the HNRNPA1 RGG-box motif. This inhibits inclusion of exon 9 and promotes inclusion of exon 10, suppressing formation of the PKM M2 isoform and promoting production of the M1 isoform. Also suppresses HNRNPA1-mediated processing of microRNA 18a (miR-18a). Promotes MYC stability through interaction with IGF2BP2. The sequence is that of HOXB-AS3 peptide from Homo sapiens (Human).